Consider the following 190-residue polypeptide: GTP cyclohydrolase 1 (190 aa).

Zn(2+)-binding residues include cysteine 79, histidine 82, and cysteine 151.

This sequence belongs to the GTP cyclohydrolase I family. In terms of assembly, toroid-shaped homodecamer, composed of two pentamers of five dimers.

The enzyme catalyses GTP + H2O = 7,8-dihydroneopterin 3'-triphosphate + formate + H(+). It functions in the pathway cofactor biosynthesis; 7,8-dihydroneopterin triphosphate biosynthesis; 7,8-dihydroneopterin triphosphate from GTP: step 1/1. The chain is GTP cyclohydrolase 1 from Clostridioides difficile (strain 630) (Peptoclostridium difficile).